The chain runs to 495 residues: PXA domain protein 1 (495 aa).

The PXA domain occupies 1–174; it reads MAKLSSLLNP…KFIIYLSKAI (174 aa). A run of 2 helical transmembrane segments spans residues 7–27 and 235–255; these read LLNP…YSGI and WFFF…FVAE. Composition is skewed to polar residues over residues 402 to 419 and 427 to 436; these read AVSS…QRSF and DSQTPSENSA. A disordered region spans residues 402 to 436; the sequence is AVSSPTKANTNKSHQRSFSIPKATKDSQTPSENSA. The chain crosses the membrane as a helical span at residues 446–466; it reads AYSQIPVIPFFLPSDKLIMLV.

The protein localises to the endosome membrane. In terms of biological role, required for required for normal vacuolar morphology and for vacuolar protein transport. Also required for endosome-to-Golgi protein transport. The polypeptide is PXA domain protein 1 (pxa1) (Schizosaccharomyces pombe (strain 972 / ATCC 24843) (Fission yeast)).